Consider the following 111-residue polypeptide: Cell cycle protein GpsB (111 aa).

A coiled-coil region spans residues 38-72 (IKDYEAFHKEFEQLKQQNARLKRELEEQKLAVTQV).

It belongs to the GpsB family. Forms polymers through the coiled coil domains. Interacts with PBP1, MreC and EzrA.

It is found in the cytoplasm. In terms of biological role, divisome component that associates with the complex late in its assembly, after the Z-ring is formed, and is dependent on DivIC and PBP2B for its recruitment to the divisome. Together with EzrA, is a key component of the system that regulates PBP1 localization during cell cycle progression. Its main role could be the removal of PBP1 from the cell pole after pole maturation is completed. Also contributes to the recruitment of PBP1 to the division complex. Not essential for septum formation. This Bacillus cereus (strain G9842) protein is Cell cycle protein GpsB.